The chain runs to 74 residues: Progonadoliberin-3 (74 aa).

The signal sequence occupies residues Val-1 to Ser-15. Gln-16 is subject to Pyrrolidone carboxylic acid. A Glycine amide modification is found at Gly-25.

This sequence belongs to the GnRH family.

The protein resides in the secreted. In terms of biological role, stimulates the secretion of gonadotropins. This chain is Progonadoliberin-3 (gnrh3), found in Oncorhynchus tshawytscha (Chinook salmon).